Reading from the N-terminus, the 327-residue chain is Cyclin-A3-3 (327 aa).

The protein belongs to the cyclin family. Cyclin AB subfamily.

The polypeptide is Cyclin-A3-3 (CYCA3-3) (Arabidopsis thaliana (Mouse-ear cress)).